Reading from the N-terminus, the 356-residue chain is Cyclin-A1-4 (356 aa).

It belongs to the cyclin family. Cyclin AB subfamily.

This is Cyclin-A1-4 (CYCA1-4) from Oryza sativa subsp. japonica (Rice).